We begin with the raw amino-acid sequence, 273 residues long: NADPH-dependent 7-cyano-7-deazaguanine reductase (273 aa).

A substrate-binding site is contributed by 80–82; that stretch reads VES. NADPH is bound at residue 82-83; the sequence is SK. Residue Cys-180 is the Thioimide intermediate of the active site. Asp-187 serves as the catalytic Proton donor. Substrate is bound at residue 219 to 220; that stretch reads HE. An NADPH-binding site is contributed by 248–249; that stretch reads RG.

It belongs to the GTP cyclohydrolase I family. QueF type 2 subfamily. In terms of assembly, homodimer.

Its subcellular location is the cytoplasm. The enzyme catalyses 7-aminomethyl-7-carbaguanine + 2 NADP(+) = 7-cyano-7-deazaguanine + 2 NADPH + 3 H(+). It participates in tRNA modification; tRNA-queuosine biosynthesis. Catalyzes the NADPH-dependent reduction of 7-cyano-7-deazaguanine (preQ0) to 7-aminomethyl-7-deazaguanine (preQ1). This chain is NADPH-dependent 7-cyano-7-deazaguanine reductase, found in Bordetella parapertussis (strain 12822 / ATCC BAA-587 / NCTC 13253).